Here is a 198-residue protein sequence, read N- to C-terminus: 3-isopropylmalate dehydratase small subunit (198 aa).

Belongs to the LeuD family. LeuD type 1 subfamily. Heterodimer of LeuC and LeuD.

It catalyses the reaction (2R,3S)-3-isopropylmalate = (2S)-2-isopropylmalate. The protein operates within amino-acid biosynthesis; L-leucine biosynthesis; L-leucine from 3-methyl-2-oxobutanoate: step 2/4. Catalyzes the isomerization between 2-isopropylmalate and 3-isopropylmalate, via the formation of 2-isopropylmaleate. The sequence is that of 3-isopropylmalate dehydratase small subunit from Colwellia psychrerythraea (strain 34H / ATCC BAA-681) (Vibrio psychroerythus).